The chain runs to 453 residues: Na(+)/H(+) antiporter NhaA (453 aa).

Transmembrane regions (helical) follow at residues 27–47 (FLHI…AALM), 78–98 (LHFW…GMEI), 114–134 (ILPI…YFSF), 143–163 (GWAV…ALLG), 172–192 (IILL…IAFF), 201–221 (GLVI…IGFA), 222–242 (SAWL…VTGI), 249–269 (VILG…PLTI), 316–336 (PWVA…VSFA), 346–366 (FLIV…GIIT), 385–405 (WAGI…SIFV), and 421–441 (IGVL…GLIY).

This sequence belongs to the NhaA Na(+)/H(+) (TC 2.A.33) antiporter family.

Its subcellular location is the cell inner membrane. It carries out the reaction Na(+)(in) + 2 H(+)(out) = Na(+)(out) + 2 H(+)(in). In terms of biological role, na(+)/H(+) antiporter that extrudes sodium in exchange for external protons. The sequence is that of Na(+)/H(+) antiporter NhaA from Bartonella henselae (strain ATCC 49882 / DSM 28221 / CCUG 30454 / Houston 1) (Rochalimaea henselae).